The following is a 500-amino-acid chain: MSAEKKYVVALDQGTTSSRAIVFDQDANIVGTSQREFTQHYPKAGWVEHDPMEIWATQSSVFTEVLAKTGLRSEEIAAIGITNQRETTVVWEKATGKPIYNAIVWQCRRTAAICEELKARGLEEYVRENTGLVLDAYFSGTKVKWILDNVEGAREKAMNGELLFGTIDTWLVWKMTNGEVHVTDPTNASRTMLYNIRDLKWDEKMLDELGIPLSMLPEVKPSSEVYGYTTRGGGSRIPIAGIAGDQQSALFGQLCFEKGMAKNTYGTGCFLLMNTGTEPVRSSNGLLTTVAIGPKGEVNYALEGAVFMGGATVQWLRDELKLIHDARDTDYFASKVGDTNGVYLVPAFVGLGAPYWDPYARGTMVGLTRGANRNHIIRAALESIAYQSRDVLDAMQQDSGIKLAALKVDGGAVANDFLMQFQSDMMHTPVVRPTRIETTAMGAAFLAGLAVGFWKSSDELEDKFSVDREFIPQMSHEERNKLYHGWQKAVERSRRWAEED.

Residue threonine 15 participates in ADP binding. Residues threonine 15, threonine 16, and serine 17 each contribute to the ATP site. Threonine 15 serves as a coordination point for sn-glycerol 3-phosphate. Arginine 19 serves as a coordination point for ADP. Sn-glycerol 3-phosphate is bound by residues arginine 85, glutamate 86, tyrosine 137, and aspartate 245. Positions 85, 86, 137, 245, and 246 each coordinate glycerol. 2 residues coordinate ADP: threonine 267 and glycine 310. 4 residues coordinate ATP: threonine 267, glycine 310, glutamine 314, and glycine 411. Residues glycine 411 and asparagine 415 each contribute to the ADP site.

This sequence belongs to the FGGY kinase family.

The catalysed reaction is glycerol + ATP = sn-glycerol 3-phosphate + ADP + H(+). It participates in polyol metabolism; glycerol degradation via glycerol kinase pathway; sn-glycerol 3-phosphate from glycerol: step 1/1. With respect to regulation, inhibited by fructose 1,6-bisphosphate (FBP). Key enzyme in the regulation of glycerol uptake and metabolism. Catalyzes the phosphorylation of glycerol to yield sn-glycerol 3-phosphate. This is Glycerol kinase from Aeromonas salmonicida (strain A449).